The primary structure comprises 468 residues: ATP synthase subunit beta (468 aa).

155–162 provides a ligand contact to ATP; sequence GGAGVGKT.

This sequence belongs to the ATPase alpha/beta chains family. As to quaternary structure, F-type ATPases have 2 components, CF(1) - the catalytic core - and CF(0) - the membrane proton channel. CF(1) has five subunits: alpha(3), beta(3), gamma(1), delta(1), epsilon(1). CF(0) has three main subunits: a(1), b(2) and c(9-12). The alpha and beta chains form an alternating ring which encloses part of the gamma chain. CF(1) is attached to CF(0) by a central stalk formed by the gamma and epsilon chains, while a peripheral stalk is formed by the delta and b chains.

Its subcellular location is the cell membrane. It catalyses the reaction ATP + H2O + 4 H(+)(in) = ADP + phosphate + 5 H(+)(out). Produces ATP from ADP in the presence of a proton gradient across the membrane. The catalytic sites are hosted primarily by the beta subunits. The chain is ATP synthase subunit beta from Streptococcus pyogenes serotype M49 (strain NZ131).